Consider the following 129-residue polypeptide: Phosphoribosyl-AMP cyclohydrolase (129 aa).

Position 85 (aspartate 85) interacts with Mg(2+). Cysteine 86 provides a ligand contact to Zn(2+). Mg(2+) is bound by residues aspartate 87 and aspartate 89. Zn(2+) is bound by residues cysteine 102 and cysteine 109.

It belongs to the PRA-CH family. In terms of assembly, homodimer. Mg(2+) serves as cofactor. Requires Zn(2+) as cofactor.

It localises to the cytoplasm. It carries out the reaction 1-(5-phospho-beta-D-ribosyl)-5'-AMP + H2O = 1-(5-phospho-beta-D-ribosyl)-5-[(5-phospho-beta-D-ribosylamino)methylideneamino]imidazole-4-carboxamide. It functions in the pathway amino-acid biosynthesis; L-histidine biosynthesis; L-histidine from 5-phospho-alpha-D-ribose 1-diphosphate: step 3/9. Functionally, catalyzes the hydrolysis of the adenine ring of phosphoribosyl-AMP. The sequence is that of Phosphoribosyl-AMP cyclohydrolase (hisI) from Methanococcus maripaludis (strain DSM 14266 / JCM 13030 / NBRC 101832 / S2 / LL).